We begin with the raw amino-acid sequence, 103 residues long: Large ribosomal subunit protein uL24 (103 aa).

The protein belongs to the universal ribosomal protein uL24 family. Part of the 50S ribosomal subunit.

One of two assembly initiator proteins, it binds directly to the 5'-end of the 23S rRNA, where it nucleates assembly of the 50S subunit. Functionally, one of the proteins that surrounds the polypeptide exit tunnel on the outside of the subunit. This chain is Large ribosomal subunit protein uL24, found in Listeria innocua serovar 6a (strain ATCC BAA-680 / CLIP 11262).